A 345-amino-acid polypeptide reads, in one-letter code: Centromere protein U (345 aa).

Composition is skewed to basic residues over residues methionine 1–asparagine 10 and histidine 19–phenylalanine 29. 2 disordered regions span residues methionine 1 to valine 37 and alanine 64 to glutamine 153. A compositionally biased stretch (basic and acidic residues) spans asparagine 88–glutamate 106. Residues serine 142–valine 152 are compositionally biased toward low complexity. Residues cysteine 201–asparagine 294 adopt a coiled-coil conformation. The Nuclear localization signal motif lies at lysine 222–leucine 239.

This sequence belongs to the CENP-U/AME1 family. As to quaternary structure, interacts with CENPH-CENPI complex at the kinetochore.

It localises to the nucleus. Its subcellular location is the chromosome. The protein resides in the centromere. In terms of biological role, probable component of a centromeric complex involved in assembly of kinetochore proteins, mitotic progression and chromosome segregation. Required for maintenance of sister chromatid adhesion during mitotic checkpoint activation. This is Centromere protein U (CENPU) from Gallus gallus (Chicken).